The sequence spans 259 residues: Imidazole glycerol phosphate synthase subunit HisF (259 aa).

Active-site residues include aspartate 11 and aspartate 130.

This sequence belongs to the HisA/HisF family. Heterodimer of HisH and HisF.

The protein resides in the cytoplasm. The catalysed reaction is 5-[(5-phospho-1-deoxy-D-ribulos-1-ylimino)methylamino]-1-(5-phospho-beta-D-ribosyl)imidazole-4-carboxamide + L-glutamine = D-erythro-1-(imidazol-4-yl)glycerol 3-phosphate + 5-amino-1-(5-phospho-beta-D-ribosyl)imidazole-4-carboxamide + L-glutamate + H(+). It functions in the pathway amino-acid biosynthesis; L-histidine biosynthesis; L-histidine from 5-phospho-alpha-D-ribose 1-diphosphate: step 5/9. IGPS catalyzes the conversion of PRFAR and glutamine to IGP, AICAR and glutamate. The HisF subunit catalyzes the cyclization activity that produces IGP and AICAR from PRFAR using the ammonia provided by the HisH subunit. This chain is Imidazole glycerol phosphate synthase subunit HisF, found in Lactococcus lactis subsp. cremoris (strain SK11).